A 393-amino-acid chain; its full sequence is Chorismate synthase (393 aa).

Arg-48 and Arg-54 together coordinate NADP(+). FMN-binding positions include 125–127 (RSS), 238–239 (NA), Gly-278, 293–297 (KPTSS), and Arg-319. Positions 355–393 (ACTTPKIPGHTGPREGQEEGPSDSEPKVEFADDPEPDEA) are disordered.

This sequence belongs to the chorismate synthase family. In terms of assembly, homotetramer. It depends on FMNH2 as a cofactor.

It catalyses the reaction 5-O-(1-carboxyvinyl)-3-phosphoshikimate = chorismate + phosphate. It participates in metabolic intermediate biosynthesis; chorismate biosynthesis; chorismate from D-erythrose 4-phosphate and phosphoenolpyruvate: step 7/7. Its function is as follows. Catalyzes the anti-1,4-elimination of the C-3 phosphate and the C-6 proR hydrogen from 5-enolpyruvylshikimate-3-phosphate (EPSP) to yield chorismate, which is the branch point compound that serves as the starting substrate for the three terminal pathways of aromatic amino acid biosynthesis. This reaction introduces a second double bond into the aromatic ring system. The polypeptide is Chorismate synthase (Nitrosospira multiformis (strain ATCC 25196 / NCIMB 11849 / C 71)).